The sequence spans 418 residues: MAIQDEMRQVAEGAREASRTLSRMPTEIKDRALKEMAERLLQQAGWLMQENEKDVAFAKNLGLSPAMIDRLTLKESTIRDMADGILEVASLPDPVGKVTSMWRRPNGLLVGRMRIPLGVIGIIYESRPNVTADAAALCLKSGNAVILRGGSEAIHSNIAIGRLLKDVLKETSLPEAAIQVVETTDREAVYELLQLEEYIDLIIPRGGEDLIRAVVRQSRIPVIKHYKGVCHVFVDADADLEMAAKICLNAKIQRPGVCNAMETLLVHREAAPRFLPELARKLRESHVVIRGCEETCALISDAEQATEADWYREYLDLVLSIRVVGGIEEAMDHIARYGSLHTESIVTNDYANAQRFLNEVNSSTVLVNASTRFSDGFQLGLGAEIGISTTKLHAYGPMGLEELTTTKFIVYGNGQVRT.

Residues 1–18 show a composition bias toward basic and acidic residues; the sequence is MAIQDEMRQVAEGAREAS. The disordered stretch occupies residues 1–22; the sequence is MAIQDEMRQVAEGAREASRTLS.

The protein belongs to the gamma-glutamyl phosphate reductase family.

It localises to the cytoplasm. It carries out the reaction L-glutamate 5-semialdehyde + phosphate + NADP(+) = L-glutamyl 5-phosphate + NADPH + H(+). It participates in amino-acid biosynthesis; L-proline biosynthesis; L-glutamate 5-semialdehyde from L-glutamate: step 2/2. Catalyzes the NADPH-dependent reduction of L-glutamate 5-phosphate into L-glutamate 5-semialdehyde and phosphate. The product spontaneously undergoes cyclization to form 1-pyrroline-5-carboxylate. This chain is Gamma-glutamyl phosphate reductase, found in Syntrophus aciditrophicus (strain SB).